A 494-amino-acid polypeptide reads, in one-letter code: Probable cytosol aminopeptidase (494 aa).

Residues Lys-260 and Asp-265 each coordinate Mn(2+). The active site involves Lys-272. Positions 283, 342, and 344 each coordinate Mn(2+). Residue Arg-346 is part of the active site.

It belongs to the peptidase M17 family. It depends on Mn(2+) as a cofactor.

It localises to the cytoplasm. The enzyme catalyses Release of an N-terminal amino acid, Xaa-|-Yaa-, in which Xaa is preferably Leu, but may be other amino acids including Pro although not Arg or Lys, and Yaa may be Pro. Amino acid amides and methyl esters are also readily hydrolyzed, but rates on arylamides are exceedingly low.. It carries out the reaction Release of an N-terminal amino acid, preferentially leucine, but not glutamic or aspartic acids.. Presumably involved in the processing and regular turnover of intracellular proteins. Catalyzes the removal of unsubstituted N-terminal amino acids from various peptides. The chain is Probable cytosol aminopeptidase from Bacillus mycoides (strain KBAB4) (Bacillus weihenstephanensis).